Consider the following 2220-residue polypeptide: MIRIAALNASSTIEDDHEGSFKSHKTQTKEAQEAEAFALYHKALDLQKHDRFEESAKAYHELLEASLLREAVSSGDEKEGLKHPGLILKYSTYKNLAQLAAQREDLETAMEFYLEAVMLDSTDVNLWYKIGHVALRLIRIPLARHAFEEGLRCNPDHWPCLDNLITVLYTLSDYTTCLYFICKALEKDCRYSKGLVLKEKIFEEQPCLRKDSLRMFLKCDMSIHDVSVSAAETQAIVDEALGLRKKRQALIVREKEPDLKLVQPIPFFTWKCLGESLLAMYNHLTTCEPPRPSLGKRIDLSDYQDPSQPLESSMVVTPVNVIQPSTVSTNPAVAVAEPVVSYTSVATTSFPLHSPGLLETGAPVGDISGGDKSKKGVKRKKISEESGETAKRRSARVRNTKCKKEEKVDFQELLMKFLPSRLRKLDPEEEDDSFNNYEVQSEAKLESFPSIGPQRLSFDSATFMESEKQDVHEFLLENLTNGGILELMMRYLKAMGHKFLVRWPPGLAEVVLSVYHSWRRHSTSLPNPLLRDCSNKHIKDMMLMSLSCMELQLDQWLLTKGRSSAVSPRNCPAGMVNGRFGPDFPGTHCLGDLLQLSFASSQRDLFEDGWLEFVVRVYWLKARFLALQGDMEQALENYDICTEMLQSSTAIQVEAGAERRDIVIRLPNLHNDSVVSLEEIDKNLKSLERCQSLEEIQRLYEAGDYKAVVHLLRPTLCTSGFDRAKHLEFMTSIPERPAQLLLLQDSLLRLKDYRQCFECSDVALNEAVQQMVNSGEAAAKEEWVATVTQLLMGIEQALSADSSGSILKVSSSTTGLVRLTNNLIQVIDCSMAVQEEAKEPHVSSVLPWIILHRIIWQEEDTFHSLCHQQQLQNPAEEGMSETPMLPSSLMLLNTAHEYLGRRSWCCNSDGALLRFYVRVLQKELAASTSEDTHPYKEELETALEQCFYCLYSFPSKKSKARYLEEHSAQQVDLIWEDALFMFEYFKPKTLPEFDSYKTSTVSADLANLLKRIATIVPRTERPALSLDKVSAYIEGTSTEVPCLPEGADPSPPVVNELYYLLADYHFKNKEQSKAIKFYMHDICICPNRFDSWAGMALARASRIQDKLNSNELKSDGPIWKHATPVLNCFRRALEIDSSNLSLWIEYGTMSYALHSFASRQLKQWRGELPPELVQQMEGRRDSMLETAKHCFTSAARCEGDGDEEEWLIHYMLGKVAEKQQQPPTVYLLHYRQAGHYLHEEAARYPKKIHYHNPPELAMEALEVYFRLHASILKLLGKPDSGVGAEVLVNFMKEAAEGPFARGEEKNTPKASEKEKACLVDEDSHSSAGTLPGPGASLPSSSGPGLTSPPYTATPIDHDYVKCKKPHQQATPDDRSQDSTAVALSDSSSTQDFFNEPTSLLEGSRKSYTEKRLPILSSQAGATGKDLQGATEERGKNEESLESTEGFRAAEQGVQKPAAETPASACIPGKPSASTPTLWDGKKRGDLPGEPVAFPQGLPAGAEEQRQFLTEQCIASFRLCLSRFPQHYKSLYRLAFLYTYSKTHRNLQWARDVLLGSSIPWQQLQHMPAQGLFCERNKTNFFNGIWRIPVDEIDRPGSFAWHMNRSIVLLLKVLAQLRDHSTLLKVSSMLQRTPDQGKKYLRDADRQVLAQRAFILTVKVLEDTLSELAEGSERPGPKVCGLPGARMTTDVSHKASPEDGQEGLPQPKKPPLADGSGPGPEPGGKVGLLNHRPVAMDAGDSADQSGERKDKESPRAGPTEPMDTSEATVCHSDLERTPPLLPGRPARDRGPESRPTELSLEELSISARQQPTPLTPAQPAPAPAPATTTGTRAGGHPEEPLSRLSRKRKLLEDTESGKTLLLDAYRVWQQGQKGVAYDLGRVERIMSETYMLIKQVDEEAALEQAVKFCQVHLGAAAQRQASGDTPTTPKHPKDSRENFFPVTVVPTAPDPVPADSVQRPSDAHTKPRPALAAATTIITCPPSASASTLDQSKDPGPPRPHRPEATPSMASLGPEGEELARVAEGTSFPPQEPRHSPQVKMAPTSSPAEPHCWPAEAALGTGAEPTCSQEGKLRPEPRRDGEAQEAASETQPLSSPPTAASSKAPSSGSAQPPEGHPGKPEPSRAKSRPLPNMPKLVIPSAATKFPPEITVTPPTPTLLSPKGSISEETKQKLKSAILSAQSAANVRKESLCQPALEVLETSSQESSLESETDEDDDYMDI.

Phosphoserine is present on residues Ser-10 and Ser-11. Thr-12 carries the post-translational modification Phosphothreonine. 2 positions are modified to phosphoserine: Ser-20 and Ser-66. TPR repeat units lie at residues 36 to 69 (AFAL…SLLR), 90 to 123 (YSTY…DSTD), and 125 to 157 (NLWY…NPDH). The segment at 361-400 (GAPVGDISGGDKSKKGVKRKKISEESGETAKRRSARVRNT) is disordered. Over residues 382-391 (ISEESGETAK) the composition is skewed to basic and acidic residues. Ser-433 and Ser-450 each carry phosphoserine. The TPR 4 repeat unit spans residues 615 to 648 (VRVYWLKARFLALQGDMEQALENYDICTEMLQSS). The residue at position 673 (Ser-673) is a Phosphoserine. TPR repeat units follow at residues 1055–1088 (NELY…CPNR) and 1106–1139 (KLNS…DSSN). Disordered stretches follow at residues 1299 to 1476 (FARG…STPT), 1668 to 1845 (AEGS…RLSR), 1916 to 2165 (AQRQ…GSIS), and 2197 to 2220 (VLET…YMDI). Residues 1301–1324 (RGEEKNTPKASEKEKACLVDEDSH) are compositionally biased toward basic and acidic residues. Over residues 1327 to 1349 (AGTLPGPGASLPSSSGPGLTSPP) the composition is skewed to low complexity. A compositionally biased stretch (polar residues) spans 1377–1397 (DSTAVALSDSSSTQDFFNEPT). Over residues 1402 to 1412 (GSRKSYTEKRL) the composition is skewed to basic and acidic residues. Ser-1439 is modified (phosphoserine). Over residues 1715–1725 (SGPGPEPGGKV) the composition is skewed to gly residues. Basic and acidic residues-rich tracts occupy residues 1744-1753 (SGERKDKESP) and 1784-1794 (PARDRGPESRP). The segment covering 1812 to 1823 (PLTPAQPAPAPA) has biased composition (pro residues). Composition is skewed to polar residues over residues 1918–1927 (RQASGDTPTT) and 1975–1989 (TIIT…STLD). Thr-1924 is subject to Phosphothreonine. Positions 2070 to 2081 (GKLRPEPRRDGE) are enriched in basic and acidic residues. Residues 2091-2112 (PLSSPPTAASSKAPSSGSAQPP) are compositionally biased toward low complexity. Ser-2094 carries the phosphoserine modification. Positions 2116 to 2153 (PGKPEPSRAKSRPLPNMPKLVIPSAATKFPPEITVTPP) are required for interaction with calcineurin. 2 positions are modified to phosphothreonine: Thr-2151 and Thr-2154. The span at 2207–2220 (LESETDEDDDYMDI) shows a compositional bias: acidic residues.

As to quaternary structure, component of a complex that includes at least ASF1A, CABIN1, HIRA, histone H3.3 and UBN1. Interacts with calcineurin. Interacts with MEF2B. Activated through PKC-mediated hyperphosphorylation. Phosphorylation by the DNA damage kinases ATM and CHK2 enhances ubiquitination. Post-translationally, upon genotoxic stress, ubiquitination by the DCX(DDB2) E3 ubiquitin-protein ligase complex targets CABIN1 for proteasomal degradation, leading to the release of p53/TP53. As to expression, widely expressed in different tissues.

It is found in the nucleus. Its function is as follows. May be required for replication-independent chromatin assembly. May serve as a negative regulator of T-cell receptor (TCR) signaling via inhibition of calcineurin. Inhibition of activated calcineurin is dependent on both PKC and calcium signals. Acts as a negative regulator of p53/TP53 by keeping p53 in an inactive state on chromatin at promoters of a subset of it's target genes. This is Calcineurin-binding protein cabin-1 (CABIN1) from Homo sapiens (Human).